Here is a 527-residue protein sequence, read N- to C-terminus: Glucose-6-phosphate isomerase (527 aa).

Glu-347 functions as the Proton donor in the catalytic mechanism. Catalysis depends on residues His-378 and Lys-493.

Belongs to the GPI family.

The protein resides in the cytoplasm. The enzyme catalyses alpha-D-glucose 6-phosphate = beta-D-fructose 6-phosphate. It functions in the pathway carbohydrate biosynthesis; gluconeogenesis. Its pathway is carbohydrate degradation; glycolysis; D-glyceraldehyde 3-phosphate and glycerone phosphate from D-glucose: step 2/4. Its function is as follows. Catalyzes the reversible isomerization of glucose-6-phosphate to fructose-6-phosphate. The polypeptide is Glucose-6-phosphate isomerase (Chlamydia caviae (strain ATCC VR-813 / DSM 19441 / 03DC25 / GPIC) (Chlamydophila caviae)).